A 253-amino-acid chain; its full sequence is MFQPAPKRCFTIESLVAKDSPLPASRSEDPIRPAALSYANSSPINPFLNGFHSAAAAAAAGRGVYSNPDLVFAEAVSHPPNPAVPVHPVPPPHALAAHPLPSSHSPHPLFASQQRDPSTFYPWLIHRYRYLGHRFQGNDASPESFLLHNALARKPKRIRTAFSPSQLLRLEHAFEKNHYVVGAERKQLAHSLSLTETQVKVWFQNRRTKFKRQKLEEEGSDSQQKKKGTHHINRWRIATKQASPEEIDVTSDD.

Residues 155-214 constitute a DNA-binding region (homeobox); sequence PKRIRTAFSPSQLLRLEHAFEKNHYVVGAERKQLAHSLSLTETQVKVWFQNRRTKFKRQK. Residues 213–253 form a disordered region; the sequence is QKLEEEGSDSQQKKKGTHHINRWRIATKQASPEEIDVTSDD. A compositionally biased stretch (basic residues) spans 225 to 234; the sequence is KKKGTHHINR.

It belongs to the EMX homeobox family. Interacts with translation initiation factor EIF4E.

The protein resides in the nucleus. The protein localises to the cell projection. Its subcellular location is the axon. In terms of biological role, transcription factor, which in cooperation with EMX1, acts to generate the boundary between the roof and archipallium in the developing brain. May function in combination with OTX1/2 to specify cell fates in the developing central nervous system. In the inner ear, it controls the distribution of GPR156 at hair cell boundaries, and regulates the organization of stereociliary bundles in opposite orientations across the line of polarity reversal (LPR). This is Homeobox protein EMX2 (EMX2) from Bos taurus (Bovine).